The sequence spans 940 residues: MDKIEVRGARTHNLKNINLTIPRDKLIVITGLSGSGKSSLAFDTLYAEGQRRYVESLSAYARQFLSLMEKPDVDHIEGLSPAISIEQKSTSHNPRSTVGTITEVYDYLRLLYARVGEPRCPDHKVPLAAQTISQMVDKVLELPEGAKMMLLAPIVKERKGEHVKTLENLAAQGFIRARIDGETCDLTDPPTLELHKKHTIEVVVDRFKVRGDLQQRLAESFETALELSGGIAVIAPMEGDGEEIVFSANFACPHCGYSMQELEPRLFSFNNPAGACGTCDGLGVQQYFDPERVIQDANLSLAQGAIRGWDQKNYYYFQMLTSLAEHYDFDLHAPFNSLSKRIQEVILKGSGRTEIEFKYINDRGDIRLKRHPFEGILNTLERRYRDTESNSVREELVKYISTKPCTSCGGTRLRLEARNVFINDTTLPQIVELSIADALTFFATLKLEGQRAQIAEKVMKEINDRLQFLVNVGLNYLNLSRSAETLSGGEAQRIRLASQIGAGLVGVMYVLDEPSIGLHQRDNERLLKTLTHLRDLGNTVLVVEHDEDAIRCADHVIDIGPGAGVHGGQVVAEGTMAEILANPDSLTGQYLSGAKQIIVPTQRTPRDKNKTVELIGASGNNLKEVNLSVPVGLFSCITGVSGSGKSTLINDTFFKIAHTQLNGATTAQPAPYKSIKGLEHFDKVIDIDQSPIGRTPRSNPATYTGIFTPIRELFSGTQESRSRGYKPGRFSFNVRGGRCEACQGDGVIKVEMHFLPDVYVPCDVCKGKRYNRETLEVHYKGKSIDEVLEMTVEDAHEFFAPVPVIARKLQTLMDVGLSYIRLGQAATTLSGGEAQRVKLARELSKRDTGKTLYILDEPTTGLHFHDIQQLLTVLHRLRDHGNTVVVIEHNLDVIKTADWIIDLGPEGGQGGGEIIAQGTPEDVAQIEGSHTARFLKPMLK.

31–38 serves as a coordination point for ATP; it reads GLSGSGKS. Residues 252-279 form a C4-type zinc finger; the sequence is CPHCGYSMQELEPRLFSFNNPAGACGTC. 2 consecutive ABC transporter domains span residues 309 to 586 and 606 to 936; these read WDQK…PDSL and RDKN…RFLK. An ATP-binding site is contributed by 639–646; it reads GVSGSGKS. The C4-type zinc finger occupies 739-765; it reads CEACQGDGVIKVEMHFLPDVYVPCDVC.

The protein belongs to the ABC transporter superfamily. UvrA family. As to quaternary structure, forms a heterotetramer with UvrB during the search for lesions.

It is found in the cytoplasm. The UvrABC repair system catalyzes the recognition and processing of DNA lesions. UvrA is an ATPase and a DNA-binding protein. A damage recognition complex composed of 2 UvrA and 2 UvrB subunits scans DNA for abnormalities. When the presence of a lesion has been verified by UvrB, the UvrA molecules dissociate. The polypeptide is UvrABC system protein A (Vibrio vulnificus (strain YJ016)).